Consider the following 266-residue polypeptide: 3-methyl-2-oxobutanoate hydroxymethyltransferase (266 aa).

Residues D45 and D84 each coordinate Mg(2+). 3-methyl-2-oxobutanoate contacts are provided by residues 45–46 (DS), D84, and K113. E115 lines the Mg(2+) pocket. The Proton acceptor role is filled by E183.

This sequence belongs to the PanB family. Homodecamer; pentamer of dimers. It depends on Mg(2+) as a cofactor.

Its subcellular location is the cytoplasm. It catalyses the reaction 3-methyl-2-oxobutanoate + (6R)-5,10-methylene-5,6,7,8-tetrahydrofolate + H2O = 2-dehydropantoate + (6S)-5,6,7,8-tetrahydrofolate. It functions in the pathway cofactor biosynthesis; (R)-pantothenate biosynthesis; (R)-pantoate from 3-methyl-2-oxobutanoate: step 1/2. Its function is as follows. Catalyzes the reversible reaction in which hydroxymethyl group from 5,10-methylenetetrahydrofolate is transferred onto alpha-ketoisovalerate to form ketopantoate. The chain is 3-methyl-2-oxobutanoate hydroxymethyltransferase from Coxiella burnetii (strain CbuK_Q154) (Coxiella burnetii (strain Q154)).